A 152-amino-acid polypeptide reads, in one-letter code: Large-conductance mechanosensitive channel (152 aa).

The next 3 membrane-spanning stretches (helical) occupy residues 21–41 (IDLA…DSLV), 44–64 (VVMP…NKFL), and 92–112 (GNFI…FWMV).

Belongs to the MscL family. Homopentamer.

The protein resides in the cell inner membrane. Its function is as follows. Channel that opens in response to stretch forces in the membrane lipid bilayer. May participate in the regulation of osmotic pressure changes within the cell. The sequence is that of Large-conductance mechanosensitive channel from Bordetella pertussis (strain Tohama I / ATCC BAA-589 / NCTC 13251).